We begin with the raw amino-acid sequence, 741 residues long: Protein O-mannosyl-transferase TMTC4 (741 aa).

The Cytoplasmic segment spans residues 1-10 (MVELDADLDH). A helical membrane pass occupies residues 11 to 31 (IVPSVLPPFWAKLVVGFVSLL). Topologically, residues 32-110 (CFARSYDGDF…FHPVGFHVVN (79 aa)) are extracellular. N-linked (GlcNAc...) asparagine glycosylation is present at asparagine 77. The helical transmembrane segment at 111–131 (ILLHGSISILMLDVFSVLFGG) threads the bilayer. Residues 132–146 (LQYTGKGQRVHLAPR) lie on the Cytoplasmic side of the membrane. The next 2 helical transmembrane spans lie at 147–166 (ASLLATLLFAVHPVHTECVA) and 167–185 (GVVGRADLLCALFFLLSFL). Residues 186–198 (GYCQAFKETGNKE) lie on the Cytoplasmic side of the membrane. The helical transmembrane segment at 199 to 219 (GTHSSTFWVLLSIFLGAVAML) threads the bilayer. The Extracellular segment spans residues 220-224 (CKEQG). Residues 225–245 (ITVLGLNAVFDILVIGKLDIL) traverse the membrane as a helical segment. The Cytoplasmic segment spans residues 246 to 265 (AAVRKVLHKDKSQENAGMFK). Residues 266 to 286 (NGGLLFRIALLTIGGTSMLYI) form a helical membrane-spanning segment. The Extracellular portion of the chain corresponds to 287–354 (RWKIMGTGPP…PLIKSVGDWR (68 aa)). Residues 355 to 375 (VIALAALWLCLIGLIFQALCS) form a helical membrane-spanning segment. The Cytoplasmic portion of the chain corresponds to 376 to 382 (EDSCKRR). A helical transmembrane segment spans residues 383–403 (ILTLGLGFLVIPFLPASNLFF). Residues 404–412 (RVGFVVAER) lie on the Extracellular side of the membrane. Residues 413 to 433 (VLYLPSAGYCVLLTFGFGALS) form a helical membrane-spanning segment. Over 434–441 (RHTKKKKP) the chain is Cytoplasmic. The chain crosses the membrane as a helical span at residues 442 to 462 (VAAIILGILLINALRCVIRSG). At 463 to 741 (EWRSEEQLFR…KLEQTQKKDV (279 aa)) the chain is on the extracellular side. TPR repeat units follow at residues 482–515 (AKVHYNIGKNLADQGNQTAAIKYYREAVRLNPKY), 516–549 (VHAMNNLGNILKERNELQEAEELLSLAVQIQPDF), 550–583 (AAAWMNLGIVQNSLKRFEEAEQSYRTAIKHRRKY), 584–617 (PDCYYNLGRLYADLNRHVDALNAWRNATVLKPEH), 618–651 (SLAWNNMIILLDNTGNLAQAEAVGREALQLIPND), 652–685 (HSLMFSLANVLGKSQKYKESEALFLKAIKANPNV), and 686–719 (ASYHGNLAVLYHRWGHLDSAKKHYEISLQLDPVA). N-linked (GlcNAc...) asparagine glycosylation is present at asparagine 497. Asparagine 609 carries N-linked (GlcNAc...) asparagine glycosylation. The N-linked (GlcNAc...) asparagine glycan is linked to asparagine 725.

It belongs to the TMTC family.

Its subcellular location is the membrane. It is found in the endoplasmic reticulum. The enzyme catalyses a di-trans,poly-cis-dolichyl beta-D-mannosyl phosphate + L-seryl-[protein] = 3-O-(alpha-D-mannosyl)-L-seryl-[protein] + a di-trans,poly-cis-dolichyl phosphate + H(+). It catalyses the reaction a di-trans,poly-cis-dolichyl beta-D-mannosyl phosphate + L-threonyl-[protein] = 3-O-(alpha-D-mannosyl)-L-threonyl-[protein] + a di-trans,poly-cis-dolichyl phosphate + H(+). Its pathway is protein modification; protein glycosylation. Its function is as follows. Transfers mannosyl residues to the hydroxyl group of serine or threonine residues. The 4 members of the TMTC family are O-mannosyl-transferases dedicated primarily to the cadherin superfamily, each member seems to have a distinct role in decorating the cadherin domains with O-linked mannose glycans at specific regions. Also acts as O-mannosyl-transferase on other proteins such as PDIA3. This is Protein O-mannosyl-transferase TMTC4 from Mus musculus (Mouse).